The chain runs to 291 residues: Small ribosomal subunit protein uS2 (291 aa).

Positions 254-291 are disordered; that stretch reads RTSNRDNKNNKNNNNTDNTDNAASIKEEDLIGGSNNEN. Residues 263 to 277 are compositionally biased toward low complexity; the sequence is NKNNNNTDNTDNAAS.

The protein belongs to the universal ribosomal protein uS2 family.

The polypeptide is Small ribosomal subunit protein uS2 (Ehrlichia canis (strain Jake)).